The chain runs to 232 residues: LexA repressor (232 aa).

A DNA-binding region (H-T-H motif) is located at residues 35–55; that stretch reads IREIGDAAGLQSTSSVAYQLK. Basic and acidic residues predominate over residues 61-85; the sequence is GFLRRDPNKPRAVDVRHLPETESRS. A disordered region spans residues 61-104; the sequence is GFLRRDPNKPRAVDVRHLPETESRSSKAATQAKSKAPQAGVHDP. The segment covering 86 to 99 has biased composition (low complexity); the sequence is SKAATQAKSKAPQA. Residues Ser156 and Lys193 each act as for autocatalytic cleavage activity in the active site.

This sequence belongs to the peptidase S24 family. In terms of assembly, homodimer.

The catalysed reaction is Hydrolysis of Ala-|-Gly bond in repressor LexA.. Functionally, represses a number of genes involved in the response to DNA damage (SOS response), including recA and lexA. In the presence of single-stranded DNA, RecA interacts with LexA causing an autocatalytic cleavage which disrupts the DNA-binding part of LexA, leading to derepression of the SOS regulon and eventually DNA repair. This Corynebacterium glutamicum (strain ATCC 13032 / DSM 20300 / JCM 1318 / BCRC 11384 / CCUG 27702 / LMG 3730 / NBRC 12168 / NCIMB 10025 / NRRL B-2784 / 534) protein is LexA repressor.